Consider the following 250-residue polypeptide: 3-deoxy-manno-octulosonate cytidylyltransferase (250 aa).

Belongs to the KdsB family.

The protein resides in the cytoplasm. It carries out the reaction 3-deoxy-alpha-D-manno-oct-2-ulosonate + CTP = CMP-3-deoxy-beta-D-manno-octulosonate + diphosphate. Its pathway is nucleotide-sugar biosynthesis; CMP-3-deoxy-D-manno-octulosonate biosynthesis; CMP-3-deoxy-D-manno-octulosonate from 3-deoxy-D-manno-octulosonate and CTP: step 1/1. It participates in bacterial outer membrane biogenesis; lipopolysaccharide biosynthesis. Its function is as follows. Activates KDO (a required 8-carbon sugar) for incorporation into bacterial lipopolysaccharide in Gram-negative bacteria. This is 3-deoxy-manno-octulosonate cytidylyltransferase from Cytophaga hutchinsonii (strain ATCC 33406 / DSM 1761 / CIP 103989 / NBRC 15051 / NCIMB 9469 / D465).